The chain runs to 260 residues: Granzyme A (260 aa).

The signal sequence occupies residues 1-26 (MRNASGPRGPSLATLLFLLLIPEGGC). A propeptide spans 27–28 (ER) (activation peptide). One can recognise a Peptidase S1 domain in the interval 29–257 (IIGGDTVVPH…HLNWIKKIMK (229 aa)). Cys-54 and Cys-70 are joined by a disulfide. Catalysis depends on charge relay system residues His-69 and Asp-113. 3 disulfide bridges follow: Cys-147-Cys-217, Cys-178-Cys-196, and Cys-207-Cys-232. Residues Asn-157 and Asn-169 are each glycosylated (N-linked (GlcNAc...) asparagine). The Charge relay system role is filled by Ser-211.

It belongs to the peptidase S1 family. Granzyme subfamily. Homodimer; disulfide-linked. Interacts with APEX1. In terms of tissue distribution, found in cytotoxic lymphocytes and in normal lymphoid tissues such as thymus and spleen. As to expression, more abundant in lymphoid tissues than isoform HF2.

The protein resides in the secreted. Its subcellular location is the cytoplasmic granule. It carries out the reaction Hydrolysis of proteins, including fibronectin, type IV collagen and nucleolin. Preferential cleavage: -Arg-|-Xaa-, -Lys-|-Xaa- &gt;&gt; -Phe-|-Xaa- in small molecule substrates.. In terms of biological role, abundant protease in the cytosolic granules of cytotoxic T-cells and NK-cells which activates caspase-independent pyroptosis when delivered into the target cell through the immunological synapse. It cleaves after Lys or Arg. Cleaves APEX1 after 'Lys-31' and destroys its oxidative repair activity. Cleaves the nucleosome assembly protein SET after 'Lys-189', which disrupts its nucleosome assembly activity and allows the SET complex to translocate into the nucleus to nick and degrade the DNA. This chain is Granzyme A (Gzma), found in Mus musculus (Mouse).